The chain runs to 149 residues: Transcriptional repressor NrdR (149 aa).

A zinc finger lies at 3 to 34 (CPYCSYEESKVVDSRSAEDYNAIRRRRECLRC). The ATP-cone domain occupies 49–139 (ILVIKKDLSR…VYRQFKDINT (91 aa)).

This sequence belongs to the NrdR family. Zn(2+) is required as a cofactor.

Its function is as follows. Negatively regulates transcription of bacterial ribonucleotide reductase nrd genes and operons by binding to NrdR-boxes. The sequence is that of Transcriptional repressor NrdR from Clostridium perfringens (strain SM101 / Type A).